Reading from the N-terminus, the 319-residue chain is Probable alcohol dehydrogenase (319 aa).

Zn(2+)-binding residues include Cys18, His39, Cys68, Cys71, Cys74, Cys82, and Cys149.

It belongs to the zinc-containing alcohol dehydrogenase family. Zn(2+) is required as a cofactor.

It catalyses the reaction a primary alcohol + NAD(+) = an aldehyde + NADH + H(+). The enzyme catalyses a secondary alcohol + NAD(+) = a ketone + NADH + H(+). This is Probable alcohol dehydrogenase (terPD) from Pseudomonas sp.